Here is a 433-residue protein sequence, read N- to C-terminus: CinA-like protein (433 aa).

Belongs to the CinA family.

The sequence is that of CinA-like protein from Prochlorococcus marinus (strain MIT 9515).